We begin with the raw amino-acid sequence, 294 residues long: Nucleoside-specific channel-forming protein Tsx (294 aa).

The first 22 residues, 1-22 (MKKTLLAAGAVVALSTTFAAGA), serve as a signal peptide directing secretion.

This sequence belongs to the nucleoside-specific channel-forming outer membrane porin (Tsx) (TC 1.B.10) family.

It localises to the cell outer membrane. Functions as a substrate-specific channel for nucleosides and deoxynucleosides. Also functions in albicidin uptake and as receptor for colicin K. Also is a receptor for several Tsx-specific bacteriophages. The protein is Nucleoside-specific channel-forming protein Tsx of Klebsiella pneumoniae.